We begin with the raw amino-acid sequence, 597 residues long: Probable translation initiation factor IF-2 (597 aa).

One can recognise a tr-type G domain in the interval 4 to 221 (IRQPIIAVLG…LIAGLSQKYL (218 aa)). Residues 13–20 (GHVDHGKT) are G1. Residue 13 to 20 (GHVDHGKT) participates in GTP binding. Positions 38 to 42 (GITQH) are G2. Positions 77–80 (DTPG) are G3. Residues 77–81 (DTPGH) and 131–134 (NKID) each bind GTP. Residues 131-134 (NKID) form a G4 region. A G5 region spans residues 199-201 (SAK).

The protein belongs to the TRAFAC class translation factor GTPase superfamily. Classic translation factor GTPase family. IF-2 subfamily.

Its function is as follows. Function in general translation initiation by promoting the binding of the formylmethionine-tRNA to ribosomes. Seems to function along with eIF-2. This chain is Probable translation initiation factor IF-2, found in Thermococcus onnurineus (strain NA1).